A 179-amino-acid polypeptide reads, in one-letter code: Large ribosomal subunit protein uL5 (179 aa).

Belongs to the universal ribosomal protein uL5 family. Part of the 50S ribosomal subunit; part of the 5S rRNA/L5/L18/L25 subcomplex. Contacts the 5S rRNA and the P site tRNA. Forms a bridge to the 30S subunit in the 70S ribosome.

Functionally, this is one of the proteins that bind and probably mediate the attachment of the 5S RNA into the large ribosomal subunit, where it forms part of the central protuberance. In the 70S ribosome it contacts protein S13 of the 30S subunit (bridge B1b), connecting the 2 subunits; this bridge is implicated in subunit movement. Contacts the P site tRNA; the 5S rRNA and some of its associated proteins might help stabilize positioning of ribosome-bound tRNAs. The sequence is that of Large ribosomal subunit protein uL5 from Shewanella oneidensis (strain ATCC 700550 / JCM 31522 / CIP 106686 / LMG 19005 / NCIMB 14063 / MR-1).